We begin with the raw amino-acid sequence, 322 residues long: Interferon regulatory factor 1 (322 aa).

Residues 5–113 constitute a DNA-binding region (IRF tryptophan pentad repeat); it reads RMRMRPWLEM…SAVRVYRMLP (109 aa). Lys-78 is modified (N6-acetyllysine). A disordered region spans residues 92 to 164; it reads EEVKDQSRNK…STLPDDHSSY (73 aa). A compositionally biased stretch (polar residues) spans 141–157; the sequence is GESSPDTFSDGLSSSTL. Glycyl lysine isopeptide (Lys-Gly) (interchain with G-Cter in SUMO) cross-links involve residues Lys-276 and Lys-296.

Belongs to the IRF family. As to quaternary structure, monomer. Homodimer. Interacts with EP300. Interacts with MYD88. Interacts with PIAS3. Interacts with SPOP. Phosphorylated by CK2 and this positively regulates its activity. In terms of processing, sumoylation represses the transcriptional activity and displays enhanced resistance to protein degradation. Sumoylated by UBE2I/UBC9 and SUMO1. Inactivates the tumor suppressor activity. Elevated levels in tumor cells. Major site is Lys-276. Sumoylation is enhanced by PIAS3. Desumoylated by SENP1 in tumor cells and appears to compete with ubiquitination on C-terminal sites. Post-translationally, ubiquitinated in a SPOP-depedent manner. Appears to compete with sumoylation on C-terminal sites.

The protein localises to the nucleus. The protein resides in the cytoplasm. Its activity is regulated as follows. Activated by MYD88. In terms of biological role, transcriptional regulator which displays a remarkable functional diversity in the regulation of cellular responses. Regulates transcription of IFN and IFN-inducible genes, host response to viral and bacterial infections, regulation of many genes expressed during hematopoiesis, inflammation, immune responses and cell proliferation and differentiation, regulation of the cell cycle and induction of growth arrest and programmed cell death following DNA damage. Stimulates both innate and acquired immune responses through the activation of specific target genes and can act as a transcriptional activator and repressor regulating target genes by binding to an interferon-stimulated response element (ISRE) in their promoters. Has an essentail role in IFNG-dependent immunity to mycobacteria. Binds to a consensus sequence in gene promoters. Its target genes for transcriptional activation activity include: genes involved in anti-viral response, such as IFN-alpha/beta, RIGI, TNFSF10/TRAIL, ZBP1, OAS1/2, PIAS1/GBP, EIF2AK2/PKR and RSAD2/viperin; antibacterial response, such as GBP2, GBP5 and NOS2/INOS; anti-proliferative response, such as p53/TP53, LOX and CDKN1A; apoptosis, such as BBC3/PUMA, CASP1, CASP7 and CASP8; immune response, such as IL7, IL12A/B and IL15, PTGS2/COX2 and CYBB; DNA damage responses and DNA repair, such as POLQ/POLH; MHC class I expression, such as TAP1, PSMB9/LMP2, PSME1/PA28A, PSME2/PA28B and B2M and MHC class II expression, such as CIITA; metabolic enzymes, such as ACOD1/IRG1. Represses genes involved in anti-proliferative response, such as BIRC5/survivin, CCNB1, CCNE1, CDK1, CDK2 and CDK4 and in immune response, such as FOXP3, IL4, ANXA2 and TLR4. Stimulates p53/TP53-dependent transcription through enhanced recruitment of EP300 leading to increased acetylation of p53/TP53. Plays an important role in immune response directly affecting NK maturation and activity, macrophage production of IL12, Th1 development and maturation of CD8+ T-cells. Also implicated in the differentiation and maturation of dendritic cells and in the suppression of regulatory T (Treg) cells development. Acts as a tumor suppressor and plays a role not only in antagonism of tumor cell growth but also in stimulating an immune response against tumor cells. The chain is Interferon regulatory factor 1 (IRF1) from Sus scrofa (Pig).